The following is a 1807-amino-acid chain: Phospholipase D (1807 aa).

The segment at 1-28 (MPGPDDDVREPTAAARTNNSGYGLRAAP) is disordered. A run of 3 helical transmembrane segments spans residues 257–277 (IAFV…IVTS), 305–325 (AGVF…VFVY), and 587–607 (VYYI…GFLA). The disordered stretch occupies residues 697–734 (TASRMGTGNLAPASSRVDSSTQSEDSFEAPKPPPSSVS). PLD phosphodiesterase domains lie at 853-880 (GFWS…CFGR) and 1249-1276 (EQIY…NDRS). Active-site residues include histidine 858, lysine 860, aspartate 865, histidine 1254, lysine 1256, and aspartate 1261. Composition is skewed to polar residues over residues 1531–1547 (FSRS…SQLD), 1568–1578 (YNSNSMPSNAS), and 1597–1614 (YPNS…QSPA). The tract at residues 1531-1621 (FSRSNSVSTP…SPAIATGARS (91 aa)) is disordered.

It belongs to the phospholipase D family. TM-PLD subfamily.

The protein localises to the membrane. It carries out the reaction a 1,2-diacyl-sn-glycero-3-phosphocholine + H2O = a 1,2-diacyl-sn-glycero-3-phosphate + choline + H(+). In terms of biological role, hydrolyzes glycerol-phospholipids at the terminal phosphodiesteric bond. The sequence is that of Phospholipase D from Phytophthora infestans (Potato late blight agent).